The following is a 362-amino-acid chain: MAPGLDLTPDFHPPTTTTTTTNNAPPQQRTLLLAPPTLATHGEARLATLFTTTYPRATTDLQMLDRLAAGLVTLPATTYDLVLVLTDPDGSRRAEAAALLADRAVWARLVPAVRAGGRVASEEGGGEGTEFLGDQRVGREAVLAGLVAGGVGGFVKPEYAEEEAVPLRFGKKKAAAAAAAAVSSAGPAVGTVKVATATSAGKKEEVGMVPPAVAAAAAAPAGVGFVDFSDDLDLDVEDDEDVIDEETLLTEEDLWRPIQQPPECQPQPGKKRRACKDCTCGLASRMEAEDKARRAKADSDLNTLKLKSEDLNELDFTVQGKTGSCGSCYLGDAFRCSDCPYIGLPAFKPGEEVKIVNNAIQL.

The interval 1-28 (MAPGLDLTPDFHPPTTTTTTTNNAPPQQ) is disordered. Over residues 15–28 (TTTTTTTNNAPPQQ) the composition is skewed to low complexity. An N-terminal SAM-like domain region spans residues 24–165 (APPQQRTLLL…KPEYAEEEAV (142 aa)). Positions 166-254 (PLRFGKKKAA…EETLLTEEDL (89 aa)) are linker. Cys264, Cys275, Cys278, and Cys280 together coordinate [2Fe-2S] cluster. Residues 264–280 (CQPQPGKKRRACKDCTC) form a fe-S binding site A region. [4Fe-4S] cluster contacts are provided by Cys325, Cys328, Cys336, and Cys339. 2 short sequence motifs (cx2C motif) span residues 325-328 (CGSC) and 336-339 (CSDC). Positions 325–339 (CGSCYLGDAFRCSDC) are fe-S binding site B.

The protein belongs to the anamorsin family. As to quaternary structure, monomer. Interacts with TAH18. Interacts with MIA40. Requires [2Fe-2S] cluster as cofactor. The cofactor is [4Fe-4S] cluster.

The protein localises to the cytoplasm. It is found in the mitochondrion intermembrane space. Component of the cytosolic iron-sulfur (Fe-S) protein assembly (CIA) machinery required for the maturation of extramitochondrial Fe-S proteins. Part of an electron transfer chain functioning in an early step of cytosolic Fe-S biogenesis, facilitating the de novo assembly of a [4Fe-4S] cluster on the scaffold complex CFD1-NBP35. Electrons are transferred to DRE2 from NADPH via the FAD- and FMN-containing protein TAH18. TAH18-DRE2 are also required for the assembly of the diferric tyrosyl radical cofactor of ribonucleotide reductase (RNR), probably by providing electrons for reduction during radical cofactor maturation in the catalytic small subunit RNR2. The chain is Fe-S cluster assembly protein DRE2 from Chaetomium globosum (strain ATCC 6205 / CBS 148.51 / DSM 1962 / NBRC 6347 / NRRL 1970) (Soil fungus).